Here is a 251-residue protein sequence, read N- to C-terminus: Methionine aminopeptidase (251 aa).

A substrate-binding site is contributed by histidine 76. Aspartate 93, aspartate 104, and histidine 168 together coordinate a divalent metal cation. Histidine 175 is a binding site for substrate. The a divalent metal cation site is built by glutamate 202 and glutamate 233.

The protein belongs to the peptidase M24A family. Methionine aminopeptidase type 1 subfamily. In terms of assembly, monomer. Co(2+) is required as a cofactor. The cofactor is Zn(2+). Requires Mn(2+) as cofactor. Fe(2+) serves as cofactor.

It carries out the reaction Release of N-terminal amino acids, preferentially methionine, from peptides and arylamides.. Functionally, removes the N-terminal methionine from nascent proteins. The N-terminal methionine is often cleaved when the second residue in the primary sequence is small and uncharged (Met-Ala-, Cys, Gly, Pro, Ser, Thr, or Val). Requires deformylation of the N(alpha)-formylated initiator methionine before it can be hydrolyzed. The protein is Methionine aminopeptidase of Staphylococcus epidermidis (strain ATCC 35984 / DSM 28319 / BCRC 17069 / CCUG 31568 / BM 3577 / RP62A).